We begin with the raw amino-acid sequence, 305 residues long: UDP-3-O-acyl-N-acetylglucosamine deacetylase (305 aa).

Residues His-79, His-238, and Asp-242 each contribute to the Zn(2+) site. His-265 acts as the Proton donor in catalysis.

Belongs to the LpxC family. Zn(2+) is required as a cofactor.

The catalysed reaction is a UDP-3-O-[(3R)-3-hydroxyacyl]-N-acetyl-alpha-D-glucosamine + H2O = a UDP-3-O-[(3R)-3-hydroxyacyl]-alpha-D-glucosamine + acetate. It participates in glycolipid biosynthesis; lipid IV(A) biosynthesis; lipid IV(A) from (3R)-3-hydroxytetradecanoyl-[acyl-carrier-protein] and UDP-N-acetyl-alpha-D-glucosamine: step 2/6. Its function is as follows. Catalyzes the hydrolysis of UDP-3-O-myristoyl-N-acetylglucosamine to form UDP-3-O-myristoylglucosamine and acetate, the committed step in lipid A biosynthesis. The sequence is that of UDP-3-O-acyl-N-acetylglucosamine deacetylase from Proteus mirabilis (strain HI4320).